The chain runs to 69 residues: Small archaeal modifier protein 2 (69 aa).

A Glycyl lysine isopeptide (Lys-Gly) (interchain with G-Cter in SAMP2) cross-link involves residue Lys55. Gly69 bears the 1-thioglycine; alternate mark. At Gly69 the chain carries Glycyl adenylate; alternate. A Glycyl lysine isopeptide (Gly-Lys) (interchain with K-? in acceptor proteins); alternate cross-link involves residue Gly69.

Post-translationally, the C-terminal glycine is likely acyl-adenylated (-COAMP) by UbaA, and also probably thiocarboxylated (-COSH) to function in sulfur transfer.

Its function is as follows. Functions as a protein modifier covalently attached to lysine residues of substrate proteins, as well as a sulfur carrier in tRNA thiolation. The protein modification process is termed sampylation and involves the formation of an isopeptide bond between the SAMP2 C-terminal glycine carboxylate and the epsilon-amino group of lysine residues on target proteins. Is able to form polymeric chains with itself likely at Lys-55, similar to ubiquitin and other ubiquitin-like proteins. May serve as a proteolytic signal in the cell to target proteins for degradation by proteasomes. This is Small archaeal modifier protein 2 from Pyrococcus furiosus (strain ATCC 43587 / DSM 3638 / JCM 8422 / Vc1).